We begin with the raw amino-acid sequence, 463 residues long: Probable diacyglycerol O-acyltransferase tgs1 (463 aa).

Met1 bears the N-acetylmethionine mark. His137 (proton acceptor) is an active-site residue.

This sequence belongs to the long-chain O-acyltransferase family.

It carries out the reaction an acyl-CoA + a 1,2-diacyl-sn-glycerol = a triacyl-sn-glycerol + CoA. The enzyme catalyses di-(9Z)-octadecenoylglycerol + (9Z)-octadecenoyl-CoA = 1,2,3-tri-(9Z-octadecenoyl)-glycerol + CoA. It participates in glycerolipid metabolism; triacylglycerol biosynthesis. In terms of biological role, catalyzes the terminal and only committed step in triacylglycerol synthesis by using diacylglycerol and fatty acyl CoA as substrates. Required for storage lipid synthesis. Upon expression in E.coli functions as a triacylglycerol synthase, making triacylglycerol (TG) from diolein and long-chain fatty acyl-CoA. Prefers C(26:0)-CoA over C(18:1)-CoA. TG synthesis activity increases in M.tuberculosis upon oxygen depletion and NO treatment, with concomitant accumulation of TG in inclusion bodies. As disruption of the gene encoding this protein obviates TG synthesis this seems to be the major enzyme involved in production of TG. Has no wax synthase activity to produce wax esters. The chain is Probable diacyglycerol O-acyltransferase tgs1 (tgs1) from Mycobacterium tuberculosis (strain ATCC 25618 / H37Rv).